We begin with the raw amino-acid sequence, 338 residues long: Diacylglycerol acyltransferase/mycolyltransferase Ag85A (338 aa).

A signal peptide spans 1-42 (MQLVDRVRGAVTGMSRRLVVGAVGAALVSGLVGAVGGTATAG). Position 85–86 (85–86 (LR)) interacts with substrate. The interval 101 to 111 (FEWYDQSGLSV) is fibronectin-binding. Cysteine 130 and cysteine 135 are joined by a disulfide. The substrate site is built by serine 169 and aspartate 197. Serine 169 functions as the Nucleophile in the catalytic mechanism. The active site involves glutamate 273. Residues 275–278 (FVRT), lysine 282, and 305–307 (HSW) each bind substrate. Residue histidine 305 is part of the active site.

This sequence belongs to the mycobacterial A85 antigen family. Homodimer.

The protein localises to the secreted. Its subcellular location is the cell wall. It is found in the cytoplasm. It catalyses the reaction an acyl-CoA + a 1,2-diacyl-sn-glycerol = a triacyl-sn-glycerol + CoA. The catalysed reaction is 2 alpha,alpha'-trehalose 6-mycolate = alpha,alpha'-trehalose 6,6'-bismycolate + alpha,alpha-trehalose. Functionally, the antigen 85 proteins (FbpA, FbpB, FbpC) are responsible for the high affinity of mycobacteria for fibronectin, a large adhesive glycoprotein, which facilitates the attachment of M.tuberculosis to murine alveolar macrophages (AMs). They also help to maintain the integrity of the cell wall by catalyzing the transfer of mycolic acids to cell wall arabinogalactan, and through the synthesis of alpha,alpha-trehalose dimycolate (TDM, cord factor). They catalyze the transfer of a mycoloyl residue from one molecule of alpha,alpha-trehalose monomycolate (TMM) to another TMM, leading to the formation of TDM. FbpA mediates triacylglycerol (TAG) formation with long-chain acyl-CoA as the acyl donor and 1,2-dipalmitoyl-sn-glycerol (1,2-dipalmitin) as the acyl acceptor. It has a preference for C26:0-CoA over C18:1-CoA. The polypeptide is Diacylglycerol acyltransferase/mycolyltransferase Ag85A (fbpA) (Mycobacterium bovis (strain ATCC BAA-935 / AF2122/97)).